A 107-amino-acid polypeptide reads, in one-letter code: Small ribosomal subunit protein uS17 (107 aa).

This sequence belongs to the universal ribosomal protein uS17 family. As to quaternary structure, part of the 30S ribosomal subunit.

One of the primary rRNA binding proteins, it binds specifically to the 5'-end of 16S ribosomal RNA. The sequence is that of Small ribosomal subunit protein uS17 from Aquifex aeolicus (strain VF5).